We begin with the raw amino-acid sequence, 221 residues long: Endo-1,4-beta-xylanase 1 (221 aa).

An N-terminal signal peptide occupies residues 1–22 (MKFFATIAALVVAAVAAPVAEA). Positions 29 to 221 (PMLIERAGPG…GTGSASVTVS (193 aa)) constitute a GH11 domain. Glutamate 114 (nucleophile) is an active-site residue. Residue glutamate 208 is the Proton donor of the active site.

This sequence belongs to the glycosyl hydrolase 11 (cellulase G) family.

The protein resides in the secreted. It catalyses the reaction Endohydrolysis of (1-&gt;4)-beta-D-xylosidic linkages in xylans.. The protein operates within glycan degradation; xylan degradation. Its function is as follows. Endo-1,4-beta-xylanase involved in the hydrolysis of xylan, a major structural heterogeneous polysaccharide found in plant biomass representing the second most abundant polysaccharide in the biosphere, after cellulose. Hydrolyzes xylans from oat spelt and birchwood at similar rates, but it has no detectable activity toward Avicel or carboxymethyl cellulose. This Aureobasidium pullulans (Black yeast) protein is Endo-1,4-beta-xylanase 1 (xynI).